The sequence spans 474 residues: ATP synthase subunit beta, chloroplastic (474 aa).

155-162 (GGAGVGKT) is a binding site for ATP.

It belongs to the ATPase alpha/beta chains family. As to quaternary structure, F-type ATPases have 2 components, CF(1) - the catalytic core - and CF(0) - the membrane proton channel. CF(1) has five subunits: alpha(3), beta(3), gamma(1), delta(1), epsilon(1). CF(0) has four main subunits: a(1), b(1), b'(1) and c(9-12).

It is found in the plastid. Its subcellular location is the chloroplast thylakoid membrane. The catalysed reaction is ATP + H2O + 4 H(+)(in) = ADP + phosphate + 5 H(+)(out). Its function is as follows. Produces ATP from ADP in the presence of a proton gradient across the membrane. The catalytic sites are hosted primarily by the beta subunits. This chain is ATP synthase subunit beta, chloroplastic, found in Thalassiosira pseudonana (Marine diatom).